A 289-amino-acid polypeptide reads, in one-letter code: Probable endonuclease 4 (289 aa).

Zn(2+) is bound by residues H74, H115, E150, D184, H187, H218, D231, H233, and E263.

The protein belongs to the AP endonuclease 2 family. Zn(2+) is required as a cofactor.

The catalysed reaction is Endonucleolytic cleavage to 5'-phosphooligonucleotide end-products.. Endonuclease IV plays a role in DNA repair. It cleaves phosphodiester bonds at apurinic or apyrimidinic (AP) sites, generating a 3'-hydroxyl group and a 5'-terminal sugar phosphate. This chain is Probable endonuclease 4, found in Mycoplasma capricolum subsp. capricolum (strain California kid / ATCC 27343 / NCTC 10154).